The chain runs to 255 residues: Hydroxyacylglutathione hydrolase (255 aa).

Zn(2+)-binding residues include H56, H58, D60, H61, H114, D133, and H171.

The protein belongs to the metallo-beta-lactamase superfamily. Glyoxalase II family. Monomer. It depends on Zn(2+) as a cofactor.

It carries out the reaction an S-(2-hydroxyacyl)glutathione + H2O = a 2-hydroxy carboxylate + glutathione + H(+). The protein operates within secondary metabolite metabolism; methylglyoxal degradation; (R)-lactate from methylglyoxal: step 2/2. Its function is as follows. Thiolesterase that catalyzes the hydrolysis of S-D-lactoyl-glutathione to form glutathione and D-lactic acid. This is Hydroxyacylglutathione hydrolase from Chelativorans sp. (strain BNC1).